The sequence spans 388 residues: G2/mitotic-specific cyclin-B (388 aa).

This sequence belongs to the cyclin family. Cyclin AB subfamily. As to quaternary structure, interacts with the CDK1 protein kinase to form a serine/threonine kinase holoenzyme complex also known as maturation promoting factor (MPF). The cyclin subunit imparts substrate specificity to the complex.

Its function is as follows. Essential for the control of the cell cycle at the G2/M (mitosis) transition. In Marthasterias glacialis (Spiny starfish), this protein is G2/mitotic-specific cyclin-B.